The following is a 308-amino-acid chain: Ribosomal RNA small subunit methyltransferase H (308 aa).

S-adenosyl-L-methionine is bound by residues 36–38 (GGH), D55, F82, D103, and Q110.

The protein belongs to the methyltransferase superfamily. RsmH family.

It localises to the cytoplasm. The enzyme catalyses cytidine(1402) in 16S rRNA + S-adenosyl-L-methionine = N(4)-methylcytidine(1402) in 16S rRNA + S-adenosyl-L-homocysteine + H(+). Functionally, specifically methylates the N4 position of cytidine in position 1402 (C1402) of 16S rRNA. The protein is Ribosomal RNA small subunit methyltransferase H of Helicobacter pylori (strain ATCC 700392 / 26695) (Campylobacter pylori).